The chain runs to 699 residues: Glycine--tRNA ligase beta subunit (699 aa).

Belongs to the class-II aminoacyl-tRNA synthetase family. As to quaternary structure, tetramer of two alpha and two beta subunits.

Its subcellular location is the cytoplasm. The catalysed reaction is tRNA(Gly) + glycine + ATP = glycyl-tRNA(Gly) + AMP + diphosphate. The protein is Glycine--tRNA ligase beta subunit of Baumannia cicadellinicola subsp. Homalodisca coagulata.